The chain runs to 587 residues: MNVTAHIEALTHWVAAIAQSLAANGVKDVVVCPGSRSTPLALAVARHPSLRVWMHLDERSAGFFALGMARARGMPAAVLCTSGTAVANLLPAVVEANLARVPLVILTADRPPELRDNGAPQTIDQIGIFGRNVRWFVDLPTPDMALLPFLRATLGRAVGLARSAPAGPVHLNLPFREPLVPDRARMAALFSETPSAVQVTPARRMIGGAELAMLATSLVEYRRGLIIAGPDCPPDLGPLLTTLAHRLRYPILADPLSGVRYGPHVDEYTLGTYDAFLRDERFVSSYAPEVVLRFGAMPTSKPLLLYLQHHPHARQIVIDGGAGWREPTSLAREHLHVDEHWFCIALADALASSQREGPTLWLRAWVSAEQTARTIIQSHLLPQEHISEPGLFARLGSWLPAGATLFVGNSMPVRDCDTFLGPRTNPLYVVGNRGANGIDGLVSTALGLAAGQARPLVMALGDLSLLHDSNGLLAARLHRLDATILLINNDGGGIFSFLPQASETDQFELLFGTPHGVDFAPLAAMHNAHYTLATDWSAVHEALQASFTGGLHLIEVRTRRDQNVIDHRTIWPLVSNALAQAGITVAE.

This sequence belongs to the TPP enzyme family. MenD subfamily. As to quaternary structure, homodimer. Requires Mg(2+) as cofactor. The cofactor is Mn(2+). It depends on thiamine diphosphate as a cofactor.

It carries out the reaction isochorismate + 2-oxoglutarate + H(+) = 5-enolpyruvoyl-6-hydroxy-2-succinyl-cyclohex-3-ene-1-carboxylate + CO2. It functions in the pathway quinol/quinone metabolism; 1,4-dihydroxy-2-naphthoate biosynthesis; 1,4-dihydroxy-2-naphthoate from chorismate: step 2/7. It participates in quinol/quinone metabolism; menaquinone biosynthesis. Catalyzes the thiamine diphosphate-dependent decarboxylation of 2-oxoglutarate and the subsequent addition of the resulting succinic semialdehyde-thiamine pyrophosphate anion to isochorismate to yield 2-succinyl-5-enolpyruvyl-6-hydroxy-3-cyclohexene-1-carboxylate (SEPHCHC). This is 2-succinyl-5-enolpyruvyl-6-hydroxy-3-cyclohexene-1-carboxylate synthase from Chloroflexus aurantiacus (strain ATCC 29366 / DSM 635 / J-10-fl).